Consider the following 157-residue polypeptide: Crossover junction endodeoxyribonuclease RuvC (157 aa).

Catalysis depends on residues Asp-7, Glu-66, and Asp-139. Residues Asp-7, Glu-66, and Asp-139 each coordinate Mg(2+).

This sequence belongs to the RuvC family. In terms of assembly, homodimer which binds Holliday junction (HJ) DNA. The HJ becomes 2-fold symmetrical on binding to RuvC with unstacked arms; it has a different conformation from HJ DNA in complex with RuvA. In the full resolvosome a probable DNA-RuvA(4)-RuvB(12)-RuvC(2) complex forms which resolves the HJ. It depends on Mg(2+) as a cofactor.

The protein resides in the cytoplasm. It carries out the reaction Endonucleolytic cleavage at a junction such as a reciprocal single-stranded crossover between two homologous DNA duplexes (Holliday junction).. Functionally, the RuvA-RuvB-RuvC complex processes Holliday junction (HJ) DNA during genetic recombination and DNA repair. Endonuclease that resolves HJ intermediates. Cleaves cruciform DNA by making single-stranded nicks across the HJ at symmetrical positions within the homologous arms, yielding a 5'-phosphate and a 3'-hydroxyl group; requires a central core of homology in the junction. The consensus cleavage sequence is 5'-(A/T)TT(C/G)-3'. Cleavage occurs on the 3'-side of the TT dinucleotide at the point of strand exchange. HJ branch migration catalyzed by RuvA-RuvB allows RuvC to scan DNA until it finds its consensus sequence, where it cleaves and resolves the cruciform DNA. The protein is Crossover junction endodeoxyribonuclease RuvC of Helicobacter pylori (strain J99 / ATCC 700824) (Campylobacter pylori J99).